We begin with the raw amino-acid sequence, 72 residues long: Translation initiation factor IF-1 (72 aa).

The region spanning 1–72 (MSKSDYIELE…TKGRITFRHK (72 aa)) is the S1-like domain.

This sequence belongs to the IF-1 family. In terms of assembly, component of the 30S ribosomal translation pre-initiation complex which assembles on the 30S ribosome in the order IF-2 and IF-3, IF-1 and N-formylmethionyl-tRNA(fMet); mRNA recruitment can occur at any time during PIC assembly.

It is found in the cytoplasm. Functionally, one of the essential components for the initiation of protein synthesis. Stabilizes the binding of IF-2 and IF-3 on the 30S subunit to which N-formylmethionyl-tRNA(fMet) subsequently binds. Helps modulate mRNA selection, yielding the 30S pre-initiation complex (PIC). Upon addition of the 50S ribosomal subunit IF-1, IF-2 and IF-3 are released leaving the mature 70S translation initiation complex. The chain is Translation initiation factor IF-1 from Vesicomyosocius okutanii subsp. Calyptogena okutanii (strain HA).